A 266-amino-acid polypeptide reads, in one-letter code: Manganese catalase (266 aa).

Residue Glu35 participates in Mn(2+) binding. Ca(2+)-binding residues include Asp57 and Asp61. Residues Glu66, His69, Glu148, and His181 each coordinate Mn(2+). Residues Asn218, Ser220, and Gly222 each coordinate Ca(2+). Residues 243–266 (ENPEAMGGIPHIKPGDPRLHNHQG) form a disordered region. The span at 255-266 (KPGDPRLHNHQG) shows a compositional bias: basic and acidic residues.

It belongs to the manganese catalase family. Homohexamer. Ca(2+) serves as cofactor. Mn(2+) is required as a cofactor.

It carries out the reaction 2 H2O2 = O2 + 2 H2O. Its function is as follows. Catalyzes the decomposition of hydrogen peroxide into water and oxygen. In Lactiplantibacillus plantarum (Lactobacillus plantarum), this protein is Manganese catalase.